The chain runs to 411 residues: Serine hydroxymethyltransferase (411 aa).

(6S)-5,6,7,8-tetrahydrofolate contacts are provided by residues L113 and 117–119; that span reads GHL. K222 carries the N6-(pyridoxal phosphate)lysine modification. (6S)-5,6,7,8-tetrahydrofolate contacts are provided by residues E238 and 346–348; that span reads SPF.

The protein belongs to the SHMT family. In terms of assembly, homodimer. Pyridoxal 5'-phosphate is required as a cofactor.

It localises to the cytoplasm. It carries out the reaction (6R)-5,10-methylene-5,6,7,8-tetrahydrofolate + glycine + H2O = (6S)-5,6,7,8-tetrahydrofolate + L-serine. Its pathway is one-carbon metabolism; tetrahydrofolate interconversion. It participates in amino-acid biosynthesis; glycine biosynthesis; glycine from L-serine: step 1/1. In terms of biological role, catalyzes the reversible interconversion of serine and glycine with tetrahydrofolate (THF) serving as the one-carbon carrier. This reaction serves as the major source of one-carbon groups required for the biosynthesis of purines, thymidylate, methionine, and other important biomolecules. Also exhibits THF-independent aldolase activity toward beta-hydroxyamino acids, producing glycine and aldehydes, via a retro-aldol mechanism. This is Serine hydroxymethyltransferase from Prochlorococcus marinus (strain NATL1A).